Consider the following 66-residue polypeptide: Regulator of G-protein signaling 6 (66 aa).

Positions 1-66 (LAVQDLKKQP…EDAQEHIYKL (66 aa)) constitute an RGS domain.

Interacts with GNB5. Interacts with RGS7BP, leading to regulate the subcellular location of the heterodimer formed with GNB5. Interacts with GNAI1.

It is found in the cytoplasm. The protein resides in the cytosol. Its subcellular location is the membrane. It localises to the nucleus. The protein localises to the cell membrane. Regulates G protein-coupled receptor signaling cascades. Inhibits signal transduction by increasing the GTPase activity of G protein alpha subunits, thereby driving them into their inactive GDP-bound form. The RGS6/GNB5 dimer enhances GNAO1 GTPase activity. The sequence is that of Regulator of G-protein signaling 6 (Rgs6) from Rattus norvegicus (Rat).